Reading from the N-terminus, the 442-residue chain is Probable D-serine dehydratase (442 aa).

At Lys115 the chain carries N6-(pyridoxal phosphate)lysine.

This sequence belongs to the serine/threonine dehydratase family. DsdA subfamily. Pyridoxal 5'-phosphate serves as cofactor.

It catalyses the reaction D-serine = pyruvate + NH4(+). This is Probable D-serine dehydratase from Halalkalibacterium halodurans (strain ATCC BAA-125 / DSM 18197 / FERM 7344 / JCM 9153 / C-125) (Bacillus halodurans).